Consider the following 247-residue polypeptide: Fumarate reductase iron-sulfur subunit (247 aa).

Tyr12 serves as a coordination point for a menaquinone. One can recognise a 2Fe-2S ferredoxin-type domain in the interval 14-94 (PEIESAPTFQ…PGPVRVEPMR (81 aa)). Positions 56, 61, and 76 each coordinate [2Fe-2S] cluster. In terms of domain architecture, 4Fe-4S ferredoxin-type spans 140–169 (LDAFKQFSMCINCMLCYSACPVYALDPDFL). Residues Cys149, Cys152, and Cys155 each coordinate [4Fe-4S] cluster. The [3Fe-4S] cluster site is built by Cys159, Cys205, and Cys211. Cys215 provides a ligand contact to [4Fe-4S] cluster. 226–229 (QRYK) provides a ligand contact to a menaquinone.

The protein belongs to the succinate dehydrogenase/fumarate reductase iron-sulfur protein family. In terms of assembly, fumarate dehydrogenase forms part of an enzyme complex containing four subunits: a flavoprotein, an iron-sulfur, and two hydrophobic anchor proteins. [2Fe-2S] cluster serves as cofactor. The cofactor is [3Fe-4S] cluster. [4Fe-4S] cluster is required as a cofactor.

The protein localises to the cell membrane. The catalysed reaction is a quinone + succinate = fumarate + a quinol. It carries out the reaction a menaquinone + succinate = a menaquinol + fumarate. This Mycobacterium tuberculosis (strain CDC 1551 / Oshkosh) protein is Fumarate reductase iron-sulfur subunit (frdB).